A 333-amino-acid polypeptide reads, in one-letter code: MIETLLQSPSSWTNFFIFFGLAVLLLFAVLGFVTYGILAERKVMGFMQGRIGPNQVGGRFGLLQTVADVLKLLLKEDSIPKAADKPLFILAPVIAFAPAFMVLAVIPFTDKFQFADIGVGLLYYIAVSGITTIGVVTGGWASNNKYSLLGGMRAAAQMISYEIPLVMSVIGIVLLAGSLNLNEIVAAQENVWYIFVQPIGFVVFLIAAVAELNRTPFDLPEAESELVSGYHTEYSGFRWAFFMLSEYVYFFGMASLITVLFLGGWNPVMFLGFIPGAVWFALKFSSVVFLLIWFRVTFPRIRGDQLMEFGWKVLLPIALANIFLTALIKELFF.

Transmembrane regions (helical) follow at residues 15 to 35, 88 to 108, 117 to 137, 159 to 179, 191 to 211, 239 to 259, 274 to 296, and 313 to 333; these read FFIFFGLAVLLLFAVLGFVTY, FILAPVIAFAPAFMVLAVIPF, IGVGLLYYIAVSGITTIGVVT, ISYEIPLVMSVIGIVLLAGSL, VWYIFVQPIGFVVFLIAAVAE, WAFFMLSEYVYFFGMASLITV, IPGAVWFALKFSSVVFLLIWFRV, and VLLPIALANIFLTALIKELFF.

This sequence belongs to the complex I subunit 1 family. As to quaternary structure, NDH-1 is composed of 14 different subunits. Subunits NuoA, H, J, K, L, M, N constitute the membrane sector of the complex.

It is found in the cell membrane. The catalysed reaction is a quinone + NADH + 5 H(+)(in) = a quinol + NAD(+) + 4 H(+)(out). In terms of biological role, NDH-1 shuttles electrons from NADH, via FMN and iron-sulfur (Fe-S) centers, to quinones in the respiratory chain. The immediate electron acceptor for the enzyme in this species is believed to be ubiquinone. Couples the redox reaction to proton translocation (for every two electrons transferred, four hydrogen ions are translocated across the cytoplasmic membrane), and thus conserves the redox energy in a proton gradient. This subunit may bind ubiquinone. The protein is NADH-quinone oxidoreductase subunit H of Bacillus anthracis (strain A0248).